We begin with the raw amino-acid sequence, 361 residues long: Glutaminyl-peptide cyclotransferase (361 aa).

The N-terminal stretch at 1-28 (MAGCRDPRVVDTLHLLLLVAVLPLAVSG) is a signal peptide. An N-linked (GlcNAc...) asparagine glycan is attached at Asn-49. The cysteines at positions 139 and 164 are disulfide-linked. Zn(2+) is bound at residue Asp-159. Asn-183 carries N-linked (GlcNAc...) asparagine glycosylation. Glu-201 acts as the Proton acceptor in catalysis. Zn(2+) is bound at residue Glu-202. Asp-248 acts as the Proton acceptor in catalysis. His-330 is a binding site for Zn(2+).

The protein belongs to the glutaminyl-peptide cyclotransferase family. In terms of tissue distribution, expressed mainly in brain tissue.

The protein localises to the secreted. The catalysed reaction is N-terminal L-glutaminyl-[peptide] = N-terminal 5-oxo-L-prolyl-[peptide] + NH4(+). Functionally, responsible for the biosynthesis of pyroglutamyl peptides. Has a bias against acidic and tryptophan residues adjacent to the N-terminal glutaminyl residue and a lack of importance of chain length after the second residue. Also catalyzes N-terminal pyroglutamate formation. This chain is Glutaminyl-peptide cyclotransferase (QPCT), found in Bos taurus (Bovine).